The following is a 400-amino-acid chain: 2-octaprenylphenol hydroxylase (400 aa).

FAD is bound by residues 49-52 and 297-303; these read RVSA and LAGQGVN.

The protein belongs to the UbiH/COQ6 family. As to quaternary structure, homotetramer. Component of the Ubi complex metabolon, which regroups five ubiquinone biosynthesis proteins (UbiE, UbiF, UbiG, UbiH and UbiI) and two accessory factors (UbiK and the lipid-binding protein UbiJ). FAD is required as a cofactor.

The protein resides in the cytoplasm. The catalysed reaction is 2-all-trans-octaprenylphenol + NADPH + O2 + H(+) = 3-(all-trans-octaprenyl)benzene-1,2-diol + NADP(+) + H2O. It carries out the reaction a 2-(all-trans-polyprenyl)phenol + NADPH + O2 + H(+) = a 3-(all-trans-polyprenyl)benzene-1,2-diol + NADP(+) + H2O. The protein operates within cofactor biosynthesis; ubiquinone biosynthesis. Functionally, FAD-dependent monooxygenase required for the aerobic hydroxylation of 2-octaprenylphenol to 2-octaprenyl-6-hydroxy-phenol, the first hydroxylation step in coenzyme Q (ubiquinone) biosynthesis. This chain is 2-octaprenylphenol hydroxylase, found in Escherichia coli (strain K12).